Here is a 248-residue protein sequence, read N- to C-terminus: 3-deoxy-manno-octulosonate cytidylyltransferase (248 aa).

This sequence belongs to the KdsB family.

It is found in the cytoplasm. The enzyme catalyses 3-deoxy-alpha-D-manno-oct-2-ulosonate + CTP = CMP-3-deoxy-beta-D-manno-octulosonate + diphosphate. It functions in the pathway nucleotide-sugar biosynthesis; CMP-3-deoxy-D-manno-octulosonate biosynthesis; CMP-3-deoxy-D-manno-octulosonate from 3-deoxy-D-manno-octulosonate and CTP: step 1/1. It participates in bacterial outer membrane biogenesis; lipopolysaccharide biosynthesis. Activates KDO (a required 8-carbon sugar) for incorporation into bacterial lipopolysaccharide in Gram-negative bacteria. The chain is 3-deoxy-manno-octulosonate cytidylyltransferase from Salmonella dublin (strain CT_02021853).